We begin with the raw amino-acid sequence, 664 residues long: Alpha-1,4-glucan:maltose-1-phosphate maltosyltransferase (664 aa).

The alpha-maltose 1-phosphate site is built by K261, Q321, and D356. D393 acts as the Nucleophile in catalysis. N394 provides a ligand contact to alpha-maltose 1-phosphate. E422 functions as the Proton donor in the catalytic mechanism. 533–534 (KY) is an alpha-maltose 1-phosphate binding site.

It belongs to the glycosyl hydrolase 13 family. GlgE subfamily. Homodimer.

It catalyses the reaction alpha-maltose 1-phosphate + [(1-&gt;4)-alpha-D-glucosyl](n) = [(1-&gt;4)-alpha-D-glucosyl](n+2) + phosphate. Its function is as follows. Maltosyltransferase that uses maltose 1-phosphate (M1P) as the sugar donor to elongate linear or branched alpha-(1-&gt;4)-glucans. Is involved in a branched alpha-glucan biosynthetic pathway from trehalose, together with TreS, Mak and GlgB. This chain is Alpha-1,4-glucan:maltose-1-phosphate maltosyltransferase, found in Pseudomonas aeruginosa (strain ATCC 15692 / DSM 22644 / CIP 104116 / JCM 14847 / LMG 12228 / 1C / PRS 101 / PAO1).